The primary structure comprises 165 residues: UPF0262 protein blr1257 (165 aa).

Belongs to the UPF0262 family.

The polypeptide is UPF0262 protein blr1257 (Bradyrhizobium diazoefficiens (strain JCM 10833 / BCRC 13528 / IAM 13628 / NBRC 14792 / USDA 110)).